We begin with the raw amino-acid sequence, 149 residues long: Large ribosomal subunit protein bL9 (149 aa).

It belongs to the bacterial ribosomal protein bL9 family.

Functionally, binds to the 23S rRNA. This is Large ribosomal subunit protein bL9 from Klebsiella pneumoniae (strain 342).